Reading from the N-terminus, the 117-residue chain is Toxin CSTX-12 (117 aa).

Residues 1 to 20 form the signal peptide; that stretch reads MKVLVICAVLFLTIFSNSSA. The propeptide occupies 21-47; it reads ETEDDFLEDESFEADDVIPFLAREQVR. 4 disulfide bridges follow: cysteine 50-cysteine 65, cysteine 57-cysteine 74, cysteine 64-cysteine 95, and cysteine 76-cysteine 93. Positions 82-87 are excised as a propeptide; that stretch reads RSDTAR. An Alanine amide modification is found at alanine 116.

This sequence belongs to the neurotoxin 19 (CSTX) family. 12 subfamily. In terms of assembly, heterodimer of A and B chains; disulfide-linked. Interacts with CSTX-1 (AC P81694), and with CSTX-9 (AC P58604). In terms of tissue distribution, expressed by the venom gland.

It is found in the secreted. It localises to the target cell membrane. In terms of biological role, synergistic toxin that induces or increases a cytolytic effect when combined with CSTX-1 (AC P81694) or CSTX-9 (AC P58604). When alone, has a weak insecticidal activity, with an unknown molecular target. The sequence is that of Toxin CSTX-12 from Cupiennius salei (American wandering spider).